Here is a 732-residue protein sequence, read N- to C-terminus: Polyribonucleotide nucleotidyltransferase (732 aa).

Residues D502 and D508 each contribute to the Mg(2+) site. The KH domain occupies 569–628 (PRLTSIQIPVDAIGMVIGKGGETIRSITEETGAEINIDDDGTVTIACSSPEGTKAAVETI). Residues 638-712 (GTIYMGKVRD…GKTKFALSIK (75 aa)) form the S1 motif domain.

Belongs to the polyribonucleotide nucleotidyltransferase family. Requires Mg(2+) as cofactor.

The protein resides in the cytoplasm. It catalyses the reaction RNA(n+1) + phosphate = RNA(n) + a ribonucleoside 5'-diphosphate. Functionally, involved in mRNA degradation. Catalyzes the phosphorolysis of single-stranded polyribonucleotides processively in the 3'- to 5'-direction. This chain is Polyribonucleotide nucleotidyltransferase, found in Chlorobaculum parvum (strain DSM 263 / NCIMB 8327) (Chlorobium vibrioforme subsp. thiosulfatophilum).